The primary structure comprises 223 residues: MLPKRASFLVSVATIPLLFGYHAIGILMFTVIAFMMQFFRDPDRIPPSDEDLIIAPADGRRLSGKIDRIERVGSDYPLIDRIFPDGSGGILISTFMSPFDVHVNRAPVSGKVIYTEHVDGRFQVARSRVLTENEKNLIVIKTDYGNVGVIQIAGFVARRIVQYVKEGEYVERGDRIGMIRFGSRVDLVLPENCEVLVKTGSRPMAGETVVARFNPGKKRVNVQ.

Ser-183 serves as the catalytic Schiff-base intermediate with substrate; via pyruvic acid. The residue at position 183 (Ser-183) is a Pyruvic acid (Ser); by autocatalysis.

Belongs to the phosphatidylserine decarboxylase family. PSD-A subfamily. In terms of assembly, heterodimer of a large membrane-associated beta subunit and a small pyruvoyl-containing alpha subunit. Pyruvate serves as cofactor. Post-translationally, is synthesized initially as an inactive proenzyme. Formation of the active enzyme involves a self-maturation process in which the active site pyruvoyl group is generated from an internal serine residue via an autocatalytic post-translational modification. Two non-identical subunits are generated from the proenzyme in this reaction, and the pyruvate is formed at the N-terminus of the alpha chain, which is derived from the carboxyl end of the proenzyme. The post-translation cleavage follows an unusual pathway, termed non-hydrolytic serinolysis, in which the side chain hydroxyl group of the serine supplies its oxygen atom to form the C-terminus of the beta chain, while the remainder of the serine residue undergoes an oxidative deamination to produce ammonia and the pyruvoyl prosthetic group on the alpha chain.

The protein localises to the cell membrane. It catalyses the reaction archaetidylserine + H(+) = archaetidylethanolamine + CO2. Catalyzes the formation of archaetidylethanolamine (PtdEtn) from archaetidylserine (PtdSer). The protein is Putative archaetidylserine decarboxylase proenzyme of Methanothermobacter thermautotrophicus (strain ATCC 29096 / DSM 1053 / JCM 10044 / NBRC 100330 / Delta H) (Methanobacterium thermoautotrophicum).